Here is a 287-residue protein sequence, read N- to C-terminus: ADP-dependent (S)-NAD(P)H-hydrate dehydratase (287 aa).

The YjeF C-terminal domain occupies 7–283 (GEDDVRKFVP…ELLPSVMKPF (277 aa)). Residues Ala-42 and His-159 each contribute to the (6S)-NADPHX site. Residues 196 to 200 (KGPTD) and Gly-224 contribute to the AMP site. Position 225 (Asp-225) interacts with (6S)-NADPHX.

It belongs to the NnrD/CARKD family. Homotetramer. The cofactor is Mg(2+).

It carries out the reaction (6S)-NADHX + ADP = AMP + phosphate + NADH + H(+). The enzyme catalyses (6S)-NADPHX + ADP = AMP + phosphate + NADPH + H(+). Functionally, catalyzes the dehydration of the S-form of NAD(P)HX at the expense of ADP, which is converted to AMP. Together with NAD(P)HX epimerase, which catalyzes the epimerization of the S- and R-forms, the enzyme allows the repair of both epimers of NAD(P)HX, a damaged form of NAD(P)H that is a result of enzymatic or heat-dependent hydration. This is ADP-dependent (S)-NAD(P)H-hydrate dehydratase from Cenarchaeum symbiosum (strain A).